Reading from the N-terminus, the 403-residue chain is MPKIIDAKVIITCPGRNFVTLKIMTDEGVYGLGDATLNGRELAVASYLTDHVIPCLIGRDAHRIEDLWQYLYKGAYWRRGPVTMTAIAAVDMALWDIKGKIAGLPVYQLLGGASREGVMVYGHANGTTIEDTVKVALDYQAQGYKAIRLQCGVPGMASTYGVSKDKYFYEPADADLPTENIWNTSKYLRIVPELFKAARESLGWDVHLLHDIHHRLTPIEAGRLGQDLEPYRPFWLEDATPAENQEAFRLIRQHTTAPLAVGEIFNSIWDAKDLIQNQLIDYIRATVVHAGGITHLRRIAALADLYQIRTGCHGATDLSPVCMAAALHFDLSVPNFGIQEYMRHMPETDAVFPHAYTFADGMMHPGDQPGLGVDIDEDLAAGYEYKRAFLPVNRLEDGTMFNW.

Substrate contacts are provided by Asn38 and His123. Catalysis depends on Tyr160, which acts as the Proton donor/acceptor. Asp211 provides a ligand contact to Mg(2+). The active-site Proton donor/acceptor is the His213. Residues Glu237 and Glu263 each contribute to the Mg(2+) site. Glu263, Arg284, His313, Asp317, and Glu340 together coordinate substrate.

This sequence belongs to the mandelate racemase/muconate lactonizing enzyme family. GalD subfamily. The cofactor is Mg(2+).

It carries out the reaction D-mannonate = 2-dehydro-3-deoxy-D-gluconate + H2O. It participates in carbohydrate metabolism; pentose and glucuronate interconversion. Functionally, catalyzes the dehydration of D-mannonate. Has no detectable activity with a panel of 70 other acid sugars (in vitro). The protein is D-mannonate dehydratase of Sphingomonas sp. (strain SKA58).